Consider the following 70-residue polypeptide: UPF0519 protein D (70 aa).

This sequence belongs to the UPF0519 family.

This is UPF0519 protein D from Dictyostelium discoideum (Social amoeba).